Here is a 263-residue protein sequence, read N- to C-terminus: MAPK-interacting and spindle-stabilizing protein (263 aa).

The tract at residues 13-238 is disordered; sequence GSPAPFLPSG…LGKQQGHNTT (226 aa). 2 stretches are compositionally biased toward pro residues: residues 14-34 and 140-155; these read SPAP…PYPG and GLQP…PPGP. Low complexity predominate over residues 156–165; it reads SAASPGPGSL. Positions 176–189 are enriched in polar residues; the sequence is PSDSSNPESTLEST. Residues 202–213 show a composition bias toward basic residues; sequence IKRRRSKKKSKR.

Belongs to the MISS family. As to quaternary structure, interacts with MAPK1. In terms of processing, phosphorylated in vitro by MAPK1.

It localises to the cytoplasm. The protein resides in the cytoskeleton. The protein localises to the spindle. Functionally, involved in the maintenance of the spindle integrity during the cytostatic factor (CSF) arrest of oocytes. This chain is MAPK-interacting and spindle-stabilizing protein (Mapk1ip1), found in Mus musculus (Mouse).